The following is a 639-amino-acid chain: Extracellular metalloproteinase mep (639 aa).

Positions 1–16 (MHMLSFIGALALPVFV) are cleaved as a signal peptide. The propeptide occupies 17 to 245 (CAQSCEPASL…IHGVVDYISE (229 aa)). N-linked (GlcNAc...) asparagine glycosylation is found at N287, N320, N336, and N368. Residue H429 coordinates Zn(2+). The active site involves E430. H433 provides a ligand contact to Zn(2+). N-linked (GlcNAc...) asparagine glycosylation is present at N509.

The protein belongs to the peptidase M36 family. Requires Zn(2+) as cofactor.

It localises to the secreted. Its function is as follows. Secreted metalloproteinase that allows assimilation of proteinaceous substrates. The sequence is that of Extracellular metalloproteinase mep (mep) from Aspergillus flavus (strain ATCC 200026 / FGSC A1120 / IAM 13836 / NRRL 3357 / JCM 12722 / SRRC 167).